A 52-amino-acid chain; its full sequence is U-scutigerotoxin(01)-Tl1a (52 aa).

An N-terminal signal peptide occupies residues 1–25; sequence MLAKAMSLLMMFLLVLVIGSVMVSA.

This sequence belongs to the scutigerotoxin-01 family. In terms of processing, contains 1 disulfide bond. In terms of tissue distribution, expressed by the venom gland.

Its subcellular location is the secreted. The sequence is that of U-scutigerotoxin(01)-Tl1a from Thereuopoda longicornis (Long-legged centipede).